Here is a 917-residue protein sequence, read N- to C-terminus: Transcription factor E2F8 (917 aa).

Positions 1 to 122 (MSSTLSEGQT…TEQGEEVEKL (122 aa)) are disordered. Polar residues-rich tracts occupy residues 16–27 (LSPSKATSTNNK) and 37–48 (PLKNSNKASTSE). Over residues 93–103 (IRNREKERAVD) the composition is skewed to basic and acidic residues. The segment covering 105 to 117 (SESENSQETEQGE) has biased composition (acidic residues). A DNA-binding region spans residues 126 to 195 (RKDKSLGLLC…LAKNRYTWHG (70 aa)). Disordered regions lie at residues 221–252 (QIRQ…FEVD), 353–386 (PAFK…SRSS), 461–497 (EQSA…GMQI), 556–615 (VGAN…SVSP), 671–698 (LEKE…QPQK), and 813–834 (GSVT…PHPG). A compositionally biased stretch (acidic residues) spans 233–252 (EFDLDGEEKENEEMSSFEVD). Residues 273–359 (RKDKSLRVMS…GRKPAFKWTG (87 aa)) mediate DNA binding. The span at 371-386 (ISTTSSAPKPLESRSS) shows a compositional bias: polar residues. Low complexity-rich tracts occupy residues 475-488 (SSQS…TSAS) and 568-578 (TSNNQTNQSSS). Residues 595–605 (EKSSVGSPSKM) show a composition bias toward polar residues. The span at 815–830 (VTPNPHTPEQSSSLQS) shows a compositional bias: polar residues.

It belongs to the E2F/DP family. Homodimer and heterodimer: mainly forms homodimers and, to a lesser extent, heterodimers with e2f7.

It localises to the nucleus. In terms of biological role, atypical E2F transcription factor that participates in various processes such as angiogenesis and polyploidization of specialized cells. Mainly acts as a transcription repressor that binds DNA independently of DP proteins and specifically recognizes the E2 recognition site 5'-TTTC[CG]CGC-3'. Directly represses transcription of classical E2F transcription factors such as e2f1. Acts as a regulator of S-phase by recognizing and binding the E2-related site 5'-TTCCCGCC-3' and mediating repression of G1/S-regulated genes. Acts as a promoter of sprouting angiogenesis, possibly by acting as a transcription activator and promoting expression of vegfa. This Danio rerio (Zebrafish) protein is Transcription factor E2F8 (e2f8).